The sequence spans 518 residues: GMP synthase [glutamine-hydrolyzing] (518 aa).

The Glutamine amidotransferase type-1 domain maps to 13-203 (KIIVLDFGSQ…ALNICGCKGD (191 aa)). The active-site Nucleophile is the C90. Residues H177 and E179 contribute to the active site. Residues 204-393 (WTMENFSEVE…LGMPDAIVWR (190 aa)) enclose the GMPS ATP-PPase domain. Position 231–237 (231–237 (SGGVDSS)) interacts with ATP.

Homodimer.

It carries out the reaction XMP + L-glutamine + ATP + H2O = GMP + L-glutamate + AMP + diphosphate + 2 H(+). Its pathway is purine metabolism; GMP biosynthesis; GMP from XMP (L-Gln route): step 1/1. Its function is as follows. Catalyzes the synthesis of GMP from XMP. The sequence is that of GMP synthase [glutamine-hydrolyzing] from Listeria innocua serovar 6a (strain ATCC BAA-680 / CLIP 11262).